Consider the following 880-residue polypeptide: DNA mismatch repair protein MutS (880 aa).

631–638 lines the ATP pocket; it reads GPNMAGKS. The disordered stretch occupies residues 835–860; it reads RAAPPPPAPAAPKTSPVEERLREIQP. The span at 850-860 shows a compositional bias: basic and acidic residues; it reads PVEERLREIQP.

Belongs to the DNA mismatch repair MutS family.

This protein is involved in the repair of mismatches in DNA. It is possible that it carries out the mismatch recognition step. This protein has a weak ATPase activity. The sequence is that of DNA mismatch repair protein MutS from Cereibacter sphaeroides (strain ATCC 17029 / ATH 2.4.9) (Rhodobacter sphaeroides).